We begin with the raw amino-acid sequence, 114 residues long: Ribosome-binding factor A (114 aa).

It belongs to the RbfA family. In terms of assembly, monomer. Binds 30S ribosomal subunits, but not 50S ribosomal subunits or 70S ribosomes.

Its subcellular location is the cytoplasm. One of several proteins that assist in the late maturation steps of the functional core of the 30S ribosomal subunit. Associates with free 30S ribosomal subunits (but not with 30S subunits that are part of 70S ribosomes or polysomes). Required for efficient processing of 16S rRNA. May interact with the 5'-terminal helix region of 16S rRNA. In Listeria welshimeri serovar 6b (strain ATCC 35897 / DSM 20650 / CCUG 15529 / CIP 8149 / NCTC 11857 / SLCC 5334 / V8), this protein is Ribosome-binding factor A.